Consider the following 457-residue polypeptide: tRNA-2-methylthio-N(6)-dimethylallyladenosine synthase (457 aa).

Residues 3–120 enclose the MTTase N-terminal domain; sequence KKVYVKTFGC…LPQMIDKRRE (118 aa). Residues Cys12, Cys49, Cys83, Cys157, Cys161, and Cys164 each contribute to the [4Fe-4S] cluster site. One can recognise a Radical SAM core domain in the interval 143–377; it reads RVDGPSAFVS…QATIEENVQR (235 aa). One can recognise a TRAM domain in the interval 380–447; the sequence is DSMVGKIERI…PHSLRGELVL (68 aa).

This sequence belongs to the methylthiotransferase family. MiaB subfamily. Monomer. Requires [4Fe-4S] cluster as cofactor.

It localises to the cytoplasm. The catalysed reaction is N(6)-dimethylallyladenosine(37) in tRNA + (sulfur carrier)-SH + AH2 + 2 S-adenosyl-L-methionine = 2-methylsulfanyl-N(6)-dimethylallyladenosine(37) in tRNA + (sulfur carrier)-H + 5'-deoxyadenosine + L-methionine + A + S-adenosyl-L-homocysteine + 2 H(+). In terms of biological role, catalyzes the methylthiolation of N6-(dimethylallyl)adenosine (i(6)A), leading to the formation of 2-methylthio-N6-(dimethylallyl)adenosine (ms(2)i(6)A) at position 37 in tRNAs that read codons beginning with uridine. The polypeptide is tRNA-2-methylthio-N(6)-dimethylallyladenosine synthase (Paraburkholderia xenovorans (strain LB400)).